A 260-amino-acid chain; its full sequence is HTH-type transcriptional repressor NanR (260 aa).

Positions 1-21 (MSAFDHSSDDTQETIGNSLRR) are disordered. The 69-residue stretch at 27–95 (KKLSEMVEEE…NGERARVSRP (69 aa)) folds into the HTH gntR-type domain. The H-T-H motif DNA-binding region spans 55–74 (ERELMAFFNVGRPSVREALA).

The protein belongs to the NanR family.

Transcriptional repressor that controls expression of the genes required for the catabolism of sialic acids. The polypeptide is HTH-type transcriptional repressor NanR (Klebsiella aerogenes (strain ATCC 13048 / DSM 30053 / CCUG 1429 / JCM 1235 / KCTC 2190 / NBRC 13534 / NCIMB 10102 / NCTC 10006 / CDC 819-56) (Enterobacter aerogenes)).